Consider the following 468-residue polypeptide: 6-phospho-beta-galactosidase (468 aa).

D-galactose 6-phosphate-binding residues include Q19, H116, N159, E160, and N297. Catalysis depends on E160, which acts as the Proton donor. Residue E375 is the Nucleophile of the active site. D-galactose 6-phosphate-binding residues include S428, W429, K435, and Y437.

The protein belongs to the glycosyl hydrolase 1 family.

It catalyses the reaction a 6-phospho-beta-D-galactoside + H2O = D-galactose 6-phosphate + an alcohol. Its pathway is carbohydrate metabolism; lactose degradation; D-galactose 6-phosphate and beta-D-glucose from lactose 6-phosphate: step 1/1. This is 6-phospho-beta-galactosidase from Streptococcus pyogenes serotype M3 (strain ATCC BAA-595 / MGAS315).